The primary structure comprises 299 residues: Probable lipid kinase YegS-like (299 aa).

A DAGKc domain is found at 1 to 129; sequence MSERKALLIL…IDLGEVGGQM (129 aa). ATP is bound by residues Thr-39, 65–71, and Thr-92; that span reads GDGTLRD. Mg(2+) is bound by residues Leu-210, Asp-213, and Leu-215. Residue Glu-268 is the Proton acceptor of the active site.

The protein belongs to the diacylglycerol/lipid kinase family. YegS lipid kinase subfamily. The cofactor is Mg(2+). Ca(2+) serves as cofactor.

Its subcellular location is the cytoplasm. Probably phosphorylates lipids; the in vivo substrate is unknown. The polypeptide is Probable lipid kinase YegS-like (Pseudomonas fluorescens (strain ATCC BAA-477 / NRRL B-23932 / Pf-5)).